The following is a 467-amino-acid chain: Acid phosphatase PHO12 (467 aa).

A signal peptide spans 1–17; it reads MLKSAVYSILAASLVNA. Residue histidine 75 is the Nucleophile of the active site. N-linked (GlcNAc...) asparagine glycosylation is found at asparagine 97, asparagine 162, asparagine 192, asparagine 250, and asparagine 315. The active-site Proton donor is the aspartate 338. N-linked (GlcNAc...) asparagine glycosylation is found at asparagine 356, asparagine 390, asparagine 439, asparagine 445, and asparagine 461.

This sequence belongs to the histidine acid phosphatase family. Glycosylated during secretion across the membrane.

It carries out the reaction a phosphate monoester + H2O = an alcohol + phosphate. This Saccharomyces cerevisiae (strain ATCC 204508 / S288c) (Baker's yeast) protein is Acid phosphatase PHO12 (PHO12).